The chain runs to 241 residues: Chaperone protein HifB (241 aa).

The N-terminal stretch at 1–27 (MGKTMFKKTLLFFTALFFAALCAFSAN) is a signal peptide.

The protein belongs to the periplasmic pilus chaperone family.

The protein resides in the periplasm. Mediates assembly of pili by forming soluble multimeric complexes with pili subunits as an intermediate step in the assembly process. This protein is involved in type B pili (HifA) assembly. The chain is Chaperone protein HifB (hifB) from Haemophilus influenzae.